An 89-amino-acid chain; its full sequence is Otospiralin (89 aa).

A signal peptide spans 1–21; sequence MQACMVPGLALCLLLGPLAGA.

It belongs to the otospiralin family. As to expression, ear specific.

It is found in the secreted. Functionally, may be essential for the survival of the neurosensory epithelium of the inner ear. The polypeptide is Otospiralin (OTOS) (Homo sapiens (Human)).